Consider the following 825-residue polypeptide: Zinc finger protein 28 (825 aa).

The disordered stretch occupies residues 26 to 65 (RPGGGPAAGTVVAPGSPDRGRPRSRNSLASQDQQGAVTSG). Over residues 33–42 (AGTVVAPGSP) the composition is skewed to low complexity. Residues 51–65 (NSLASQDQQGAVTSG) are compositionally biased toward polar residues. Positions 103-174 (VTFGDVAVVF…KRKMRKGQHL (72 aa)) constitute a KRAB domain. 14 C2H2-type zinc fingers span residues 377–399 (FQCN…QRIH), 405–427 (YKCN…QRCH), 433–456 (YECP…RYYH), 462–484 (FDCI…RRIH), 490–512 (YTCE…QRIH), 518–540 (YECE…QRVH), 546–568 (FKCK…WRIH), 574–596 (FECG…QRIH), 602–624 (YECK…QKTH), 630–652 (YECK…QRVH), 658–680 (YKCL…RRLH), 686–708 (YECV…RRCH), 714–736 (YECS…QRIH), and 742–764 (YECK…KRVH). Residues 770–792 (YNYKKGRRAFRQTAHFAHHQQIH) form a C2H2-type 15; degenerate zinc finger.

This sequence belongs to the krueppel C2H2-type zinc-finger protein family. As to expression, expressed predominantly in ovary.

Its subcellular location is the nucleus. Functionally, may be involved in transcriptional regulation. May have a role in embryonic development. This is Zinc finger protein 28 (Zfp28) from Mus musculus (Mouse).